The sequence spans 623 residues: E3 ubiquitin-protein ligase ORTHRUS 5 (623 aa).

The segment at 12 to 62 (DGVCMRCQVNPPSEETLTCGTCVTPWHVSCLLPESLASSTGDWECPDCSGV) adopts a PHD-type zinc-finger fold. The RING-type 1 zinc-finger motif lies at 129–169 (CSICIQLPERPVTTPCGHNFCLKCFEKWAVGQGKLTCMICR). In terms of domain architecture, YDG spans 258 to 407 (TRNQGVLVGE…HKMCRYLFVR (150 aa)). The RING-type 2 zinc-finger motif lies at 498 to 555 (CQICRKVLSLPVTTPCAHNFCKACLEAKFAGITQLRDRSNGVRKLRAKKNIMTCPCCT). Residues 580 to 623 (KSEEEAEVAESSNISEEEGEEESEPPTKKIKMDKNSVGGTSLSA) form a disordered region. Residues 594-603 (SEEEGEEESE) show a composition bias toward acidic residues. Positions 604–613 (PPTKKIKMDK) are enriched in basic and acidic residues.

In terms of tissue distribution, expressed in inflorescences.

The protein localises to the nucleus. The enzyme catalyses S-ubiquitinyl-[E2 ubiquitin-conjugating enzyme]-L-cysteine + [acceptor protein]-L-lysine = [E2 ubiquitin-conjugating enzyme]-L-cysteine + N(6)-ubiquitinyl-[acceptor protein]-L-lysine.. Its pathway is protein modification; protein ubiquitination. E3 ubiquitin-protein ligase. Participates in CpG methylation-dependent transcriptional regulation and epigenetic transcriptional silencing. Mediates ubiquitination with the E2 ubiquitin-conjugating enzyme UBC11. The protein is E3 ubiquitin-protein ligase ORTHRUS 5 (ORTH5) of Arabidopsis thaliana (Mouse-ear cress).